Here is a 391-residue protein sequence, read N- to C-terminus: Leucine-rich repeat-containing protein 74B (391 aa).

The segment at 1–38 (MKGPCEVQKNEDQEGEAAATGPQAETLEAERSWTADSH) is disordered. Basic and acidic residues predominate over residues 28–38 (EAERSWTADSH). LRR repeat units lie at residues 106–126 (YIKRLDLRDNGLCGAGAEALA), 134–154 (IISDVDLSENQIGAAGLQAIC), 162–182 (TVEKMQLQGNRLEEQAAQHLA), 190–211 (GLKSLDLSYNQLNDLAGEILGP), 218–239 (GLTELNLSWNHLRGLGATAFAR), 246–259 (FLKVLDISHNGFGD), 274–294 (VLEELNMRNNRISVSGALKLG), 302–323 (TLRILIISKNPIRSDGCVGLLK), and 332–354 (ALELLDVSDIQVSRECEDLASSM). A disordered region spans residues 371–391 (KDWPQASTPSQPASAPSDSGL). Low complexity predominate over residues 374–391 (PQASTPSQPASAPSDSGL).

This chain is Leucine-rich repeat-containing protein 74B, found in Mus musculus (Mouse).